Reading from the N-terminus, the 435-residue chain is Centrosomal protein of 55 kDa (435 aa).

Disordered regions lie at residues 1–63 (MAAK…TDKA), 213–239 (HKEA…KVSR), and 268–287 (ERRR…ALLQ). Coiled-coil stretches lie at residues 18–140 (SSSS…KNKY) and 185–373 (EAYV…RESR). Composition is skewed to basic and acidic residues over residues 26-49 (AELE…DMKR) and 213-222 (HKEAKSDDQS).

It is found in the cytoplasm. The protein resides in the cytoskeleton. Its subcellular location is the microtubule organizing center. The protein localises to the centrosome. It localises to the centriole. It is found in the cleavage furrow. The protein resides in the midbody. Its subcellular location is the midbody ring. Its function is as follows. Plays a role in mitotic exit and cytokinesis. Recruits PDCD6IP and TSG101 to midbody during cytokinesis. Required for successful completion of cytokinesis. Not required for microtubule nucleation. Plays a role in the development of the brain and kidney. The polypeptide is Centrosomal protein of 55 kDa (Danio rerio (Zebrafish)).